The chain runs to 473 residues: H(+)/Cl(-) exchange transporter ClcA (473 aa).

Topologically, residues 1 to 32 (MKTDTSTFLAQQIVRLRRRDQIRRLMQRDKTP) are cytoplasmic. The helical transmembrane segment at 33-69 (LAILFMAAVVGTLTGLVGVAFEKTVSWVQNMRIGALV) threads the bilayer. At 70–76 (QVADHAF) the chain is on the periplasmic side. Residues 77–100 (LLWPLAFILSALLAMVGYFLVRKF) form a helical membrane-spanning segment. Positions 106-110 (GSGIP) match the Selectivity filter part_1 motif. Ser107 is a binding site for chloride. Positions 109-116 (IPEIEGAL) form an intramembrane region, helical. Residues 117-123 (EELRPVR) are Cytoplasmic-facing. Transmembrane regions (helical) follow at residues 124–141 (WWRV…TLGA) and 148–166 (EGPT…LDVF). Positions 146 to 150 (GREGP) match the Selectivity filter part_2 motif. The Cytoplasmic portion of the chain corresponds to 167–176 (RMRSAEARHT). 2 intramembrane regions (helical) span residues 177–189 (LLAT…LSAA) and 193–201 (PLAGILFII). Over 202-214 (EEMRPQFRYNLIS) the chain is Cytoplasmic. Residues 215–232 (IKAVFTGVIMSSIVFRIF) traverse the membrane as a helical segment. Residues 233-252 (NGEAPIIEVGKLSDAPVNTL) are Periplasmic-facing. A helical membrane pass occupies residues 253–281 (WLYLILGIIFGCVGPVFNSLVLRTQDMFQ). Over 282-287 (RFHGGE) the chain is Cytoplasmic. The helical transmembrane segment at 288–309 (IKKWVLMGGAIGGLCGILGLIE) threads the bilayer. At 310–329 (PAAAGGGFNLIPIAAAGNFS) the chain is on the periplasmic side. The next 2 helical transmembrane spans lie at 330–349 (VGLL…LCFS) and 355–376 (GIFA…MAAA). The Selectivity filter part_3 motif lies at 355 to 359 (GIFAP). Positions 356 and 357 each coordinate chloride. The Periplasmic portion of the chain corresponds to 377–386 (VLFPQYHPEA). The segment at residues 387 to 401 (GTFAIAGMGALMAAS) is an intramembrane region (helical). The segment at residues 402–404 (VRA) is an intramembrane region (note=Loop between two helices). Residues 405–416 (PLTGIVLVLEMT) constitute an intramembrane region (helical). The segment at residues 417–421 (DNYQL) is an intramembrane region (note=Loop between two helices). A helical transmembrane segment spans residues 422–438 (ILPMIITCLGATLLAQF). Residues 439-473 (LGGKPLYSTILARTLAKQDAEQAAKNQNAPAGENT) are Cytoplasmic-facing. Residue Tyr445 coordinates chloride.

It belongs to the chloride channel (TC 2.A.49) family. ClcA subfamily. Homodimer.

It localises to the cell inner membrane. It carries out the reaction 2 chloride(in) + H(+)(out) = 2 chloride(out) + H(+)(in). Functionally, proton-coupled chloride transporter. Functions as antiport system and exchanges two chloride ions for 1 proton. Probably acts as an electrical shunt for an outwardly-directed proton pump that is linked to amino acid decarboxylation, as part of the extreme acid resistance (XAR) response. The protein is H(+)/Cl(-) exchange transporter ClcA of Salmonella paratyphi A (strain AKU_12601).